Here is a 471-residue protein sequence, read N- to C-terminus: Retinoic acid receptor RXR-beta-A (471 aa).

The segment at M1–M34 is disordered. The segment at M1–K102 is modulating. A compositionally biased stretch (low complexity) spans P10 to P25. The segment at residues K122 to D197 is a DNA-binding region (nuclear receptor). 2 consecutive NR C4-type zinc fingers follow at residues C125–C145 and C161–C185. Positions Q196–E216 are enriched in basic and acidic residues. Residues Q196–E226 are disordered. The hinge stretch occupies residues E198–S221. In terms of domain architecture, NR LBD spans N224 to P467.

The protein belongs to the nuclear hormone receptor family. NR2 subfamily. In terms of assembly, homodimer. Heterodimer; with a rar molecule. Binds DNA preferentially as a rar/rxr heterodimer. Heterodimerizes with rarga. In terms of tissue distribution, shows uniform expression from the blastula to mid-gastrula stages. At 12 hours post-fertilization (hpf), expressed ubiquitously but more weakly. At 24 hpf, restricted to the ventral diencephalon, pharangeal endoderm and trunk and tail mesoderm; mesoderm expression is in medial cells of each somite along the dorsoventral axis, forming stripes. At 48 hpf, expressed in forebrain, eye, midbrain and anterior hindbrain.

The protein resides in the nucleus. Functionally, receptor for retinoic acid. Retinoic acid receptors bind as heterodimers to their target response elements in response to their ligands, all-trans or 9-cis retinoic acid, and regulate gene expression in various biological processes. The rar/rxr heterodimers bind to the retinoic acid response elements (RARE) composed of tandem 5'-AGGTCA-3' sites known as DR1-DR5. The high affinity ligand for rxrs is 9-cis retinoic acid. The chain is Retinoic acid receptor RXR-beta-A (rxrba) from Danio rerio (Zebrafish).